A 483-amino-acid polypeptide reads, in one-letter code: MASIRELHQQLIKKERSAVEITTEALDRIEKLEPLLHSFLHITADQALESAKKVDAKIAAKEEIGLLEGIPVGIKDNMCTQGIPTTCGSKILENFVPPYESTVTQKLKDSGAITLGKTNLDEFAMGSSTESSGYQVTANPWDLSRVPGGSSGGSAAAVASEECVVALGSDTGGSIRQPASYCGVVGLKPTYGLVSRFGLVAYASSLDQIGPFARTVEDAAILLGAIAGYDPKDSTSLNVEIPDYTQFLKPKLSKLKIGIIKETFGEGLDPVVADTVNQGVEQLKKLGAKVKEISCPRFRYGLPAYYIIAPSEASANLARYDAVKYGIRKEADTLMSMYTTTRASGFGAEVKRRIMLGTYALSAGYYDAYYLKAQKVRTLIKQDFEQAFEEVDVLVCPTAPTTAFKAGEKTDDPLSMYLSDLMTIPVNLGGLPGMSIPCGFDRLGLPIGMQLISNVLREDLLFQVAYAYEQATDWHKRKPPLPQ.

Catalysis depends on charge relay system residues Lys75 and Ser150. Residue Ser174 is the Acyl-ester intermediate of the active site.

The protein belongs to the amidase family. GatA subfamily. Heterotrimer of A, B and C subunits.

The enzyme catalyses L-glutamyl-tRNA(Gln) + L-glutamine + ATP + H2O = L-glutaminyl-tRNA(Gln) + L-glutamate + ADP + phosphate + H(+). Allows the formation of correctly charged Gln-tRNA(Gln) through the transamidation of misacylated Glu-tRNA(Gln) in organisms which lack glutaminyl-tRNA synthetase. The reaction takes place in the presence of glutamine and ATP through an activated gamma-phospho-Glu-tRNA(Gln). The chain is Glutamyl-tRNA(Gln) amidotransferase subunit A from Gloeothece citriformis (strain PCC 7424) (Cyanothece sp. (strain PCC 7424)).